Here is a 254-residue protein sequence, read N- to C-terminus: Phosphoribosylaminoimidazole-succinocarboxamide synthase (254 aa).

Belongs to the SAICAR synthetase family.

The catalysed reaction is 5-amino-1-(5-phospho-D-ribosyl)imidazole-4-carboxylate + L-aspartate + ATP = (2S)-2-[5-amino-1-(5-phospho-beta-D-ribosyl)imidazole-4-carboxamido]succinate + ADP + phosphate + 2 H(+). The protein operates within purine metabolism; IMP biosynthesis via de novo pathway; 5-amino-1-(5-phospho-D-ribosyl)imidazole-4-carboxamide from 5-amino-1-(5-phospho-D-ribosyl)imidazole-4-carboxylate: step 1/2. The protein is Phosphoribosylaminoimidazole-succinocarboxamide synthase of Bartonella tribocorum (strain CIP 105476 / IBS 506).